We begin with the raw amino-acid sequence, 187 residues long: 3'-5' DNA exonuclease Cap18 (187 aa).

Residues 9-173 enclose the Exonuclease domain; the sequence is VSVDVETSGP…HDARYQAELF (165 aa). Residues Asp-12, Met-25, His-160, and Asp-165 each coordinate Mg(2+). The active-site Proton donor/acceptor is the His-160.

It belongs to the Cap18 exonuclease family. In terms of assembly, homodimer.

Its function is as follows. Effector component of a CBASS antivirus system. CBASS (cyclic oligonucleotide-based antiphage signaling system) provides immunity against bacteriophage. The CD-NTase protein synthesizes cyclic nucleotides in response to infection; these serve as specific second messenger signals. The signals activate a diverse range of effectors, leading to bacterial cell death and thus abortive phage infection. A type III CBASS system. A sequence non-specific 3'-5' DNA exonuclease that preferentially degrades ssDNA with 3' overhangs or a mismatch at the 3' end. Expression of this CBASS system (Cap17-CapW-CdnC-Cap7-Cap6-Cap18-Cap19) in a susceptible E.coli (strain JP313) confers resistance to bacteriophage lambda cI--. The polypeptide is 3'-5' DNA exonuclease Cap18 (Escherichia coli).